A 205-amino-acid chain; its full sequence is Putative 3-methyladenine DNA glycosylase (205 aa).

Belongs to the DNA glycosylase MPG family.

The chain is Putative 3-methyladenine DNA glycosylase from Bacillus cereus (strain G9842).